Reading from the N-terminus, the 471-residue chain is Pachytene checkpoint protein 2 homolog (471 aa).

213–220 (GPPGTGKT) contributes to the ATP binding site.

The protein belongs to the AAA ATPase family. PCH2 subfamily.

Its function is as follows. Plays a key role in chromosome recombination during meiosis. The polypeptide is Pachytene checkpoint protein 2 homolog (Oryza sativa subsp. indica (Rice)).